Reading from the N-terminus, the 107-residue chain is Phosphoribosyl-ATP pyrophosphatase (107 aa).

Belongs to the PRA-PH family.

The protein resides in the cytoplasm. It catalyses the reaction 1-(5-phospho-beta-D-ribosyl)-ATP + H2O = 1-(5-phospho-beta-D-ribosyl)-5'-AMP + diphosphate + H(+). It functions in the pathway amino-acid biosynthesis; L-histidine biosynthesis; L-histidine from 5-phospho-alpha-D-ribose 1-diphosphate: step 2/9. In Bacillus cereus (strain AH187), this protein is Phosphoribosyl-ATP pyrophosphatase.